Reading from the N-terminus, the 268-residue chain is MGQKINPHGFRLGITTDWKSRWYADKQYAEYVKEDVAIRKLLATGMERAGIAKVEIERTRDRVRVDIHTARPGIVIGRRGAEADRIRSELEKLTGKQVQLNILEVKNAEAEAQLVAQGVAEQLSNRVAFRRAMRKAIQSAMRQPNVKGIRVQCSGRLGGAEMSRSEFYREGRVPLHTLRADIDYGLYEAKTTFGRIGVKVWIYKGDIVGGKRELAANVAAPAGDRPRRERPSRPRRSGATGTTATSTEAGRAATATADAPATTEQKEG.

One can recognise a KH type-2 domain in the interval 38–106 (IRKLLATGME…QVQLNILEVK (69 aa)). The interval 218 to 268 (VAAPAGDRPRRERPSRPRRSGATGTTATSTEAGRAATATADAPATTEQKEG) is disordered. Positions 237-268 (SGATGTTATSTEAGRAATATADAPATTEQKEG) are enriched in low complexity.

The protein belongs to the universal ribosomal protein uS3 family. In terms of assembly, part of the 30S ribosomal subunit. Forms a tight complex with proteins S10 and S14.

Functionally, binds the lower part of the 30S subunit head. Binds mRNA in the 70S ribosome, positioning it for translation. The sequence is that of Small ribosomal subunit protein uS3 from Rhodococcus jostii (strain RHA1).